The following is a 94-amino-acid chain: MGALFRLLLQERGKAAEFYSRGRKQRRPSASCTFGGIWSSGVDMLPNGAVGSLTQLGPSRPVLGIDYSKKEFRGTAENVTGLNTILHFRKRTRS.

This is an uncharacterized protein from Homo sapiens (Human).